The chain runs to 101 residues: Small ribosomal subunit protein bS18c (101 aa).

The protein belongs to the bacterial ribosomal protein bS18 family. As to quaternary structure, part of the 30S ribosomal subunit.

The protein localises to the plastid. Its subcellular location is the chloroplast. The sequence is that of Small ribosomal subunit protein bS18c from Gossypium barbadense (Sea Island cotton).